A 254-amino-acid polypeptide reads, in one-letter code: Putative electron transfer flavoprotein subunit YdiQ (254 aa).

It belongs to the ETF beta-subunit/FixA family. As to quaternary structure, ydiR and YdiQ form a heterodimer.

May play a role in a redox process. This is Putative electron transfer flavoprotein subunit YdiQ (ydiQ) from Escherichia coli (strain K12).